The following is a 172-amino-acid chain: uncharacterized protein (172 aa).

This is an uncharacterized protein from Agrobacterium tumefaciens (strain Ach5).